Consider the following 476-residue polypeptide: Cysteine--tRNA ligase (476 aa).

Residue C28 coordinates Zn(2+). Residues 30–40 (VTTYDFCHIGH) carry the 'HIGH' region motif. Residues C215, H241, and E245 each contribute to the Zn(2+) site. The 'KMSKS' region motif lies at 273–277 (KMSKS). K276 contacts ATP.

This sequence belongs to the class-I aminoacyl-tRNA synthetase family. Monomer. Zn(2+) is required as a cofactor.

Its subcellular location is the cytoplasm. It catalyses the reaction tRNA(Cys) + L-cysteine + ATP = L-cysteinyl-tRNA(Cys) + AMP + diphosphate. This chain is Cysteine--tRNA ligase, found in Buchnera aphidicola subsp. Cinara cedri (strain Cc).